The chain runs to 210 residues: Probable HTH-type transcriptional regulator ArpR (210 aa).

The HTH tetR-type domain maps to 10-70 (QETRAQIIEA…ALLDSLHETH (61 aa)). The segment at residues 33-52 (TLADIAELAGVTRGAIYWHF) is a DNA-binding region (H-T-H motif).

Probable regulatory protein for the antibiotic efflux pump arpABC operon. May function as a repressor. The protein is Probable HTH-type transcriptional regulator ArpR (arpR) of Pseudomonas putida (Arthrobacter siderocapsulatus).